The sequence spans 995 residues: Integrator complex subunit 8 (995 aa).

Threonine 18 carries the phosphothreonine modification. A WFEF motif motif is present at residues 24-29 (WFEFLL). TPR repeat units lie at residues 250–288 (CQVCYDLGAAYFQQGSTNSAVYENAREKFFRTKELIAEI), 320–356 (SQQLTPYSQVHICLRSGNYQEVIQIFIEDNLTLSLPV), 570–603 (VYILMAKGLHCSTVKDFSHAKQLFAACLELVTEF), and 833–866 (HSWLIIQADIYFATNQYSAALHYYLQAGAVCSDF).

Belongs to the Integrator subunit 8 family. As to quaternary structure, component of the Integrator complex, composed of core subunits INTS1, INTS2, INTS3, INTS4, INTS5, INTS6, INTS7, INTS8, INTS9/RC74, INTS10, INTS11/CPSF3L, INTS12, INTS13, INTS14 and INTS15. The core complex associates with protein phosphatase 2A subunits PPP2CA and PPP2R1A, to form the Integrator-PP2A (INTAC) complex.

The protein resides in the nucleus. The protein localises to the chromosome. Its function is as follows. Component of the integrator complex, a multiprotein complex that terminates RNA polymerase II (Pol II) transcription in the promoter-proximal region of genes. The integrator complex provides a quality checkpoint during transcription elongation by driving premature transcription termination of transcripts that are unfavorably configured for transcriptional elongation: the complex terminates transcription by (1) catalyzing dephosphorylation of the C-terminal domain (CTD) of Pol II subunit POLR2A/RPB1 and SUPT5H/SPT5, (2) degrading the exiting nascent RNA transcript via endonuclease activity and (3) promoting the release of Pol II from bound DNA. The integrator complex is also involved in terminating the synthesis of non-coding Pol II transcripts, such as enhancer RNAs (eRNAs), small nuclear RNAs (snRNAs), telomerase RNAs and long non-coding RNAs (lncRNAs). Within the integrator complex, INTS8 is required for the recruitment of protein phosphatase 2A (PP2A) to transcription pause-release checkpoint. The chain is Integrator complex subunit 8 from Homo sapiens (Human).